The primary structure comprises 101 residues: MDKSKRLFTKSKRSFRRRLPPIQSGDRIDYRNMSLISRFISEQGKILSRRVNRLTLKQQRLITIAIKQARILSSLPFLNNEKQFERSESTTKTTGLRTRNK.

The protein belongs to the bacterial ribosomal protein bS18 family. Part of the 30S ribosomal subunit.

Its subcellular location is the plastid. It localises to the chloroplast. The sequence is that of Small ribosomal subunit protein bS18c from Carica papaya (Papaya).